We begin with the raw amino-acid sequence, 201 residues long: Ran-specific GTPase-activating protein 1 (201 aa).

Composition is skewed to basic and acidic residues over residues 1-17 (MSSE…EEAA) and 32-66 (KKAE…IHFE). The disordered stretch occupies residues 1 to 66 (MSSEDKKPVV…APESPDIHFE (66 aa)). Serine 60 carries the phosphoserine modification. Residues 64 to 200 (HFEPVVHLEK…FEKAQEINKK (137 aa)) enclose the RanBD1 domain.

The protein belongs to the RANBP1 family. As to quaternary structure, interacts with GSP1 and PRP20.

The protein localises to the cytoplasm. It localises to the nucleus. Its function is as follows. Important for the export of protein containing nuclear export signal (NES) out of the nucleus. Stimulates the GTPase activity of GSP1 and GSP2. The sequence is that of Ran-specific GTPase-activating protein 1 (YRB1) from Saccharomyces cerevisiae (strain ATCC 204508 / S288c) (Baker's yeast).